The chain runs to 438 residues: Xaa-Pro dipeptidase 2 (438 aa).

Asp-242, Asp-253, His-333, Glu-378, and Glu-414 together coordinate Mn(2+).

Belongs to the peptidase M24B family. Bacterial-type prolidase subfamily. Mn(2+) is required as a cofactor.

It carries out the reaction Xaa-L-Pro dipeptide + H2O = an L-alpha-amino acid + L-proline. In terms of biological role, splits dipeptides with a prolyl residue in the C-terminal position. This is Xaa-Pro dipeptidase 2 from Idiomarina loihiensis (strain ATCC BAA-735 / DSM 15497 / L2-TR).